Consider the following 884-residue polypeptide: Alanine--tRNA ligase (884 aa).

Zn(2+)-binding residues include H572, H576, C673, and H677.

Belongs to the class-II aminoacyl-tRNA synthetase family. Requires Zn(2+) as cofactor.

The protein localises to the cytoplasm. The catalysed reaction is tRNA(Ala) + L-alanine + ATP = L-alanyl-tRNA(Ala) + AMP + diphosphate. Catalyzes the attachment of alanine to tRNA(Ala) in a two-step reaction: alanine is first activated by ATP to form Ala-AMP and then transferred to the acceptor end of tRNA(Ala). Also edits incorrectly charged Ser-tRNA(Ala) and Gly-tRNA(Ala) via its editing domain. The protein is Alanine--tRNA ligase of Xylella fastidiosa (strain M12).